The following is a 716-amino-acid chain: Polyribonucleotide nucleotidyltransferase (716 aa).

Positions 488 and 494 each coordinate Mg(2+). In terms of domain architecture, KH spans 555–614; sequence PKIETITIPTDKIREVIGTGGKVIREIVATTGAKVDINDEGTVKVSASDGAKIKAAIDWI. One can recognise an S1 motif domain in the interval 624 to 692; it reads GAIYDGKVVK…DRGKTKLSMK (69 aa). The interval 695–716 is disordered; the sequence is DQETGEDLSKKEAVSPEEAVNT.

This sequence belongs to the polyribonucleotide nucleotidyltransferase family. The cofactor is Mg(2+).

Its subcellular location is the cytoplasm. It catalyses the reaction RNA(n+1) + phosphate = RNA(n) + a ribonucleoside 5'-diphosphate. Involved in mRNA degradation. Catalyzes the phosphorolysis of single-stranded polyribonucleotides processively in the 3'- to 5'-direction. The chain is Polyribonucleotide nucleotidyltransferase from Caulobacter sp. (strain K31).